The following is a 516-amino-acid chain: uncharacterized protein (516 aa).

This sequence to H.influenzae HI_0521.

This is an uncharacterized protein from Escherichia coli (strain K12).